Consider the following 232-residue polypeptide: Succinyl-CoA:3-ketoacid coenzyme A transferase subunit A (232 aa).

24–30 contacts CoA; sequence GGFGLCG.

This sequence belongs to the 3-oxoacid CoA-transferase subunit A family. As to quaternary structure, heterodimer of a subunit A and a subunit B.

It carries out the reaction a 3-oxo acid + succinyl-CoA = a 3-oxoacyl-CoA + succinate. The polypeptide is Succinyl-CoA:3-ketoacid coenzyme A transferase subunit A (scoA) (Helicobacter pylori (strain J99 / ATCC 700824) (Campylobacter pylori J99)).